The sequence spans 376 residues: Transcription initiation factor IIA subunit 1 (376 aa).

Position 2 is an N-acetylalanine (Ala2). 2 stretches are compositionally biased toward low complexity: residues 69–79 (QVQQQHQPQQQ) and 89–105 (QAQP…TQQV). Disordered regions lie at residues 69–107 (QVQQ…QVLI), 247–266 (QAQI…AQTQ), and 274–329 (DGTG…QELF). A phosphoserine; by TAF1 mark is found at Ser280, Ser281, Ser316, and Ser321. The span at 280–329 (SSEEDEDEEEDYDDDEEEDKEKDGAEDGQVEEEPLNSEDDVSDEEGQELF) shows a compositional bias: acidic residues. Residues His343 and Arg344 each contribute to the DNA site.

It belongs to the TFIIA subunit 1 family. As to quaternary structure, TFIIA is a heterodimer of the large unprocessed subunit 1 and a small subunit gamma. It was originally believed to be a heterotrimer of an alpha (p35), a beta (p19) and a gamma subunit (p12). TFIIA forms a complex with TBP. Part of TBP-based Pol II pre-initiation complex (PIC), in which Pol II core assembles with general transcription factors and other specific initiation factors including GTF2E1, GTF2E2, GTF2F1, GTF2F2, TCEA1, ERCC2, ERCC3, GTF2H2, GTF2H3, GTF2H4, GTF2H5, GTF2A1, GTF2A2, GTF2B and TBP; this large multi-subunit PIC complex mediates DNA unwinding and targets Pol II core to the transcription start site where the first phosphodiester bond forms. Post-translationally, the alpha and beta subunits are postranslationally produced from the precursor form by TASP1. The cleavage promotes proteasomal degradation.

It is found in the nucleus. Functionally, TFIIA is a component of the transcription machinery of RNA polymerase II and plays an important role in transcriptional activation. TFIIA in a complex with TBP mediates transcriptional activity. This is Transcription initiation factor IIA subunit 1 (GTF2A1) from Homo sapiens (Human).